A 318-amino-acid polypeptide reads, in one-letter code: Ubiquinone biosynthesis protein COQ9, mitochondrial (318 aa).

The N-terminal 44 residues, 1 to 44 (MAAAAVSGALGRAGWRLLQLRCLPVARCRQALVPRAFHASAVGL), are a transit peptide targeting the mitochondrion. The SIFI-degron motif lies at 16-31 (RLLQLRCLPVARCRQA). The interval 44–98 (LRSSDEQKQQPPNSFSQQHSETQGAEKPDPESSHSPPRYTDQGGEEEEDYESEEQ) is disordered. Polar residues predominate over residues 52–66 (QQPPNSFSQQHSETQ). Acidic residues predominate over residues 86–97 (GGEEEEDYESEE). An N6-acetyllysine modification is found at K175. R244 provides a ligand contact to a 1,2-diacylglycero-3-phosphoethanolamine.

The protein belongs to the COQ9 family. Homodimer. Heterodimer; two heterodimers of COQ7:COQ9 come together on the same side of the lipid pseudo-bilayer and form a curved tetramer with a hydrophobic surface suitable for membrane interaction. These two tetramers assemble into a soluble octamer with a pseudo-bilayer of lipids captured within. Interacts with COQ7; this interaction allows ubiquinone (CoQ) isoprene intermediates presentation to COQ7 and facilitates the COQ7-mediated hydroxylase step. Post-translationally, in response to mitochondrial stress, the precursor protein is ubiquitinated by the SIFI complex in the cytoplasm before mitochondrial import, leading to its degradation. Within the SIFI complex, UBR4 initiates ubiquitin chain that are further elongated or branched by KCMF1.

It localises to the mitochondrion. The protein operates within cofactor biosynthesis; ubiquinone biosynthesis. Functionally, membrane-associated protein that warps the membrane surface to access and bind aromatic isoprenes with high specificity, including ubiquinone (CoQ) isoprene intermediates and presents them directly to COQ7, therefore facilitating the COQ7-mediated hydroxylase step. Participates in the biosynthesis of coenzyme Q, also named ubiquinone, an essential lipid-soluble electron transporter for aerobic cellular respiration. The protein is Ubiquinone biosynthesis protein COQ9, mitochondrial of Homo sapiens (Human).